Here is a 90-residue protein sequence, read N- to C-terminus: Small ribosomal subunit protein bS16 (90 aa).

The protein belongs to the bacterial ribosomal protein bS16 family.

The polypeptide is Small ribosomal subunit protein bS16 (Streptococcus pneumoniae serotype 19F (strain G54)).